The sequence spans 108 residues: uncharacterized protein (108 aa).

Residues 1-15 (MSDSNSRLVYSTQTG) show a composition bias toward polar residues. Positions 1-29 (MSDSNSRLVYSTQTGRIEEPKTAPVRPKG) are disordered. Basic and acidic residues predominate over residues 16–29 (RIEEPKTAPVRPKG).

It belongs to the SUI1 family.

This is an uncharacterized protein from Salmonella typhi.